We begin with the raw amino-acid sequence, 696 residues long: Glycine--tRNA ligase beta subunit (696 aa).

This sequence belongs to the class-II aminoacyl-tRNA synthetase family. Tetramer of two alpha and two beta subunits.

Its subcellular location is the cytoplasm. It catalyses the reaction tRNA(Gly) + glycine + ATP = glycyl-tRNA(Gly) + AMP + diphosphate. This Nitratidesulfovibrio vulgaris (strain ATCC 29579 / DSM 644 / CCUG 34227 / NCIMB 8303 / VKM B-1760 / Hildenborough) (Desulfovibrio vulgaris) protein is Glycine--tRNA ligase beta subunit.